A 324-amino-acid polypeptide reads, in one-letter code: D-alanine--D-alanine ligase (324 aa).

One can recognise an ATP-grasp domain in the interval 116 to 311; sequence KQVWHTLGIP…FQQLVLAILA (196 aa). 142–197 contacts ATP; the sequence is ATELGFPLIVKPAHEGSSIGMAKVSSASELIDAWKAASTYDSQVLVEQWIHGPEFT. Residues Asp265, Glu278, and Asn280 each contribute to the Mg(2+) site.

Belongs to the D-alanine--D-alanine ligase family. Requires Mg(2+) as cofactor. Mn(2+) serves as cofactor.

The protein resides in the cytoplasm. The enzyme catalyses 2 D-alanine + ATP = D-alanyl-D-alanine + ADP + phosphate + H(+). It functions in the pathway cell wall biogenesis; peptidoglycan biosynthesis. In terms of biological role, cell wall formation. The sequence is that of D-alanine--D-alanine ligase from Pseudomonas fluorescens (strain Pf0-1).